Here is a 606-residue protein sequence, read N- to C-terminus: Peptide-N(4)-(N-acetyl-beta-glucosaminyl)asparagine amidase (606 aa).

Residues 2–108 (PVTEVGSLPE…IAEKIRQHYS (107 aa)) enclose the Thioredoxin domain. Positions 191, 194, 225, and 228 each coordinate Zn(2+). Cys-251 functions as the Nucleophile in the catalytic mechanism. Residues His-278 and Asp-295 contribute to the active site. A PAW domain is found at 404–606 (DLGGRITGSE…SFSVKIWMKN (203 aa)).

It belongs to the transglutaminase-like superfamily. PNGase family. Requires Zn(2+) as cofactor.

The protein resides in the cytoplasm. Its subcellular location is the endoplasmic reticulum. It catalyses the reaction Hydrolysis of an N(4)-(acetyl-beta-D-glucosaminyl)asparagine residue in which the glucosamine residue may be further glycosylated, to yield a (substituted) N-acetyl-beta-D-glucosaminylamine and a peptide containing an aspartate residue.. With respect to regulation, inhibited by Zn(2+) and z-VAD-fmk (caspase inhibitor) but unaffected by EDTA. In terms of biological role, specifically deglycosylates the denatured form of N-linked glycoproteins in the cytoplasm and assists their proteasome-mediated degradation. Cleaves the beta-aspartyl-glucosamine (GlcNAc) of the glycan and the amide side chain of Asn, converting Asn to Asp. Prefers proteins containing high-mannose over those bearing complex type oligosaccharides. Can recognize misfolded proteins in the endoplasmic reticulum that are exported to the cytosol to be destroyed and deglycosylate them, while it has no activity toward native proteins. Deglycosylation is a prerequisite for subsequent proteasome-mediated degradation of some, but not all, misfolded glycoproteins. Also displays oxidoreductase (thioredoxin) activity. Involved in regulating the expression of proteasomal subunits such as rpt-3 in order to confer resistance to proteasomal dysfunction. The chain is Peptide-N(4)-(N-acetyl-beta-glucosaminyl)asparagine amidase (png-1) from Caenorhabditis elegans.